A 740-amino-acid chain; its full sequence is Ion-translocating oxidoreductase complex subunit C (740 aa).

4Fe-4S ferredoxin-type domains are found at residues 369–397 (GEPQEEQSCIRCSACADACPADLLPQQLY) and 407–436 (KATTHNIADCIECGACAWVCPSNIPLVQYF). 8 residues coordinate [4Fe-4S] cluster: cysteine 377, cysteine 380, cysteine 383, cysteine 387, cysteine 416, cysteine 419, cysteine 422, and cysteine 426. The tract at residues 602–716 (KLEQQQANAE…EPEEQVDPRK (115 aa)) is disordered.

This sequence belongs to the 4Fe4S bacterial-type ferredoxin family. RnfC subfamily. The complex is composed of six subunits: RsxA, RsxB, RsxC, RsxD, RsxE and RsxG. The cofactor is [4Fe-4S] cluster.

The protein resides in the cell inner membrane. Functionally, part of a membrane-bound complex that couples electron transfer with translocation of ions across the membrane. Required to maintain the reduced state of SoxR. This is Ion-translocating oxidoreductase complex subunit C from Escherichia coli (strain SE11).